We begin with the raw amino-acid sequence, 432 residues long: MGKSVAILGAQWGDEGKGKIVDLLTDRVKYVVRYQGGHNAGHTLIINGEKTVLRLIPSGILRENVTCLIGNGVVLSPAALMQEMGELESRGINVRDRLKISEACPLILPYHVAMDHAREAALGKNKIGTTGRGIGPAYEDKVSRRGLRVSDLFNREAFAEKLKTILEYYNFQLVHYYKVEPVDYQKTLDDVFAVADIITGMVADITTLLHKARANGDNILFEGAQGTMLDIDHGTYPFVTSSNTTAGGIATGSGFGPRNLDYVLGIIKAYCTRVGSGPFTTELFDEVGAEIARKGNEFGAVTGRPRRCGWFDAVAVRRAIQINSISGFCMTKLDVLDGFEELKICVAYKLQNGEIVEYSPLAAANWEGVEPIYETLPGWKENTFRVTKLEDLPQNAINYIKRIEEVLGVPVDILSTGPDRVETMILRDPFAA.

GTP is bound by residues 13–19 and 41–43; these read GDEGKGK and GHT. The active-site Proton acceptor is aspartate 14. 2 residues coordinate Mg(2+): aspartate 14 and glycine 41. IMP contacts are provided by residues 14–17, 39–42, threonine 130, arginine 144, glutamine 225, threonine 240, and arginine 304; these read DEGK and NAGH. Histidine 42 serves as the catalytic Proton donor. Position 300–306 (300–306) interacts with substrate; sequence AVTGRPR. GTP contacts are provided by residues arginine 306, 332 to 334, and 415 to 417; these read KLD and STG.

The protein belongs to the adenylosuccinate synthetase family. Homodimer. It depends on Mg(2+) as a cofactor.

It localises to the cytoplasm. It catalyses the reaction IMP + L-aspartate + GTP = N(6)-(1,2-dicarboxyethyl)-AMP + GDP + phosphate + 2 H(+). Its pathway is purine metabolism; AMP biosynthesis via de novo pathway; AMP from IMP: step 1/2. Plays an important role in the de novo pathway of purine nucleotide biosynthesis. Catalyzes the first committed step in the biosynthesis of AMP from IMP. This is Adenylosuccinate synthetase from Glaesserella parasuis serovar 5 (strain SH0165) (Haemophilus parasuis).